Here is a 469-residue protein sequence, read N- to C-terminus: MTTKTRFAPSPTGFLHVGGARTALYSWLQARANNGEFVLRIEDTDIERSTQAACDAILEGMNWLGLTWDEGPYYQTKRFDRYNEIIAQMLAKGTAYKCYCSRERIDALREAQAANGEAQKYDGCCRDLPARDTDEPFVVRFKNPIGGSVVFDDHVRGRIEFSNDALDDLIIARTDGVPTYNFCVVVDDWDMGITCVVRGEDHINNTPRQINILKALGAPIPEYAHVSMILGDDGAKLSKRHGAVSVMQYRDDGYLPEALLNYLVRLGWSHGDQEIFSLEEMKQYFKLGDINKAASAFNTDKLVWLNQHYIKSLAPEYVATHLQWHMDDQEIDLSNGPALAEVVTALAERAKTLKELAASSRYFYEDFAEFDEAQAKKHLRGVALEPLQLVQQKLAALTDWTVEAIHQAIEDTATELDVGMGKVGMPLRVAVTGAGQSPGLDITLFLIGRSRSEQRISKAIEFVADRINS.

The 'HIGH' region motif lies at 9–19; that stretch reads PSPTGFLHVGG. 4 residues coordinate Zn(2+): C98, C100, C125, and D127. Residues 236-240 carry the 'KMSKS' region motif; it reads KLSKR. K239 serves as a coordination point for ATP.

Belongs to the class-I aminoacyl-tRNA synthetase family. Glutamate--tRNA ligase type 1 subfamily. Monomer. It depends on Zn(2+) as a cofactor.

It is found in the cytoplasm. It carries out the reaction tRNA(Glu) + L-glutamate + ATP = L-glutamyl-tRNA(Glu) + AMP + diphosphate. Functionally, catalyzes the attachment of glutamate to tRNA(Glu) in a two-step reaction: glutamate is first activated by ATP to form Glu-AMP and then transferred to the acceptor end of tRNA(Glu). This Shewanella baltica (strain OS155 / ATCC BAA-1091) protein is Glutamate--tRNA ligase.